The sequence spans 257 residues: UPF0246 protein lpl1317 (257 aa).

It belongs to the UPF0246 family.

This Legionella pneumophila (strain Lens) protein is UPF0246 protein lpl1317.